Consider the following 234-residue polypeptide: Orotidine 5'-phosphate decarboxylase (234 aa).

Substrate is bound by residues D11, K33, 60-69, T120, R181, Q190, G210, and R211; that span reads DLKFHDIPNT. K62 (proton donor) is an active-site residue.

The protein belongs to the OMP decarboxylase family. Type 1 subfamily. Homodimer.

The catalysed reaction is orotidine 5'-phosphate + H(+) = UMP + CO2. Its pathway is pyrimidine metabolism; UMP biosynthesis via de novo pathway; UMP from orotate: step 2/2. In terms of biological role, catalyzes the decarboxylation of orotidine 5'-monophosphate (OMP) to uridine 5'-monophosphate (UMP). In Shewanella sediminis (strain HAW-EB3), this protein is Orotidine 5'-phosphate decarboxylase.